A 348-amino-acid polypeptide reads, in one-letter code: Dihydroorotate dehydrogenase (quinone) (348 aa).

Residues 60 to 64 (AGLDK) and Thr-84 each bind FMN. Substrate is bound at residue Lys-64. Position 109 to 113 (109 to 113 (NRMGF)) interacts with substrate. FMN contacts are provided by Asn-137 and Asn-170. Residue Asn-170 participates in substrate binding. Ser-173 acts as the Nucleophile in catalysis. Asn-175 contacts substrate. 2 residues coordinate FMN: Lys-215 and Thr-243. 244–245 (NT) is a binding site for substrate. Residues Gly-266, Gly-295, and 316-317 (YS) contribute to the FMN site.

Belongs to the dihydroorotate dehydrogenase family. Type 2 subfamily. In terms of assembly, monomer. Requires FMN as cofactor.

It is found in the cell membrane. The catalysed reaction is (S)-dihydroorotate + a quinone = orotate + a quinol. The protein operates within pyrimidine metabolism; UMP biosynthesis via de novo pathway; orotate from (S)-dihydroorotate (quinone route): step 1/1. Its function is as follows. Catalyzes the conversion of dihydroorotate to orotate with quinone as electron acceptor. The protein is Dihydroorotate dehydrogenase (quinone) of Nitrosospira multiformis (strain ATCC 25196 / NCIMB 11849 / C 71).